The following is a 164-amino-acid chain: Protein-export protein SecB (164 aa).

The protein belongs to the SecB family. As to quaternary structure, homotetramer, a dimer of dimers. One homotetramer interacts with 1 SecA dimer.

It localises to the cytoplasm. One of the proteins required for the normal export of preproteins out of the cell cytoplasm. It is a molecular chaperone that binds to a subset of precursor proteins, maintaining them in a translocation-competent state. It also specifically binds to its receptor SecA. The sequence is that of Protein-export protein SecB from Orientia tsutsugamushi (strain Ikeda) (Rickettsia tsutsugamushi).